The following is a 997-amino-acid chain: Autophagy-related protein 9 (997 aa).

Over 1–318 (MERDEYQLPN…DVYNYYLGNG (318 aa)) the chain is Cytoplasmic. A Phosphoserine modification is found at serine 19. Residues 29–39 (VNPSLNSQEMS) are compositionally biased toward polar residues. A disordered region spans residues 29–88 (VNPSLNSQEMSNFPLPDIERGSSLLHSTNDSREDVDENDLRVPESDQGTSTEEEDEVDEE). The segment covering 79–88 (TEEEDEVDEE) has biased composition (acidic residues). Residues lysine 113 and lysine 121 each participate in a glycyl lysine isopeptide (Lys-Gly) (interchain with G-Cter in ubiquitin) cross-link. Position 122 is a phosphoserine (serine 122). 2 disordered regions span residues 127–159 (LVEG…DGFD) and 214–234 (HHDK…NQKH). Lysine 138 is covalently cross-linked (Glycyl lysine isopeptide (Lys-Gly) (interchain with G-Cter in ubiquitin)). 2 positions are modified to phosphoserine: serine 143 and serine 144. Residues 144-159 (SEEEEDNEFINNDGFD) show a composition bias toward acidic residues. Over residues 221 to 233 (ANNGPRNINGNQK) the composition is skewed to polar residues. A helical transmembrane segment spans residues 319–339 (FYCIILEKILNICTLLFVVFV). Residues 340 to 376 (STYMGHCVDYSKLPTSHRVSDIIIDKCYSNSITGFTK) are Lumenal-facing. The helical transmembrane segment at 377–397 (FFLWMFYFFVILKIVQLYFDV) threads the bilayer. Topologically, residues 398–538 (QKLSELQNFY…EELQKRFMLA (141 aa)) are cytoplasmic. The stretch at 539 to 559 (GFLNIILAPFLVTYFVLLYFF) is an intramembrane region. The Cytoplasmic portion of the chain corresponds to 560–620 (RYFNEYKTSP…DQFPKEKTNL (61 aa)). The helical transmembrane segment at 621–641 (FLKFVSFICGSFVAILAFLTV) threads the bilayer. At 642–656 (FDPENFLNFEITSDR) the chain is on the lumenal side. Position 657 is a phosphoserine (serine 657). Residues 657 to 677 (SVIFYITILGAIWSVSRNTIT) traverse the membrane as a helical segment. Over 678 to 723 (QEYHVFDPEETLKELYEYTHYLPKEWEGRYHKEEIKLEFCKLYNLR) the chain is Cytoplasmic. Lysine 701 is covalently cross-linked (Glycyl lysine isopeptide (Lys-Gly) (interchain with G-Cter in ubiquitin)). Residues 724-744 (IVILLRELTSLMITPFVLWFS) lie within the membrane without spanning it. Topologically, residues 745 to 997 (LPSSAGRIVD…EYYKKSDVGR (253 aa)) are cytoplasmic. Residues serine 787 and serine 792 each carry the phosphoserine modification. Residue threonine 794 is modified to Phosphothreonine. Phosphoserine is present on serine 802. The residue at position 804 (threonine 804) is a Phosphothreonine. Phosphoserine occurs at positions 831, 842, 864, 948, and 969.

It belongs to the ATG9 family. Homotrimer; forms a homotrimer with a central pore that forms a path between the two membrane leaflets. Interacts with ATG23 and ATG27 to form a cycling complex for trafficking to the PAS. Interacts (via N-terminus) with ATG11, required for recruitment of ATG9 to the PAS for the Cvt pathway during nutrient-rich conditions. Interacts (via N-terminus) with ATG17; required for recruitment to the PAS during autophagy and starved conditions. Interacts with ATG2 and ATG18; required for the retrieval of ATG9 from the PAS to the cytoplasmic pool. Interacts with ATG41. Interacts with the conserved oligomeric Golgi (COG) complex subunits COG3 and COG4. Interacts with TRS85. Phosphorylated by ATG1; phosphorylation is required for autophagy and cytoplasm to vacuole transport (Cvt) vesicle formation. Phosphorylation by ATG1 regulates ATG18 interaction and preautophagosome elongation. Phosphorylation at Ser-122 is required for selective autophagy by regulating anterograde trafficking and interaction with ATG23 and ATG27. Phosphorylation at Ser-122 prevents ubiquitination by the SCF(MET30) complex. In terms of processing, ubiquitinated by the SCF(MET30) complex in normal conditions, leading to its degradation by the proteasome, thereby preventing inappropriate induction of autophagy. Ubiquitination by the SCF(MET30) complex is prevented by phosphorylation at Ser-122.

It is found in the preautophagosomal structure membrane. It localises to the cytoplasmic vesicle membrane. Its subcellular location is the golgi apparatus membrane. The protein localises to the endoplasmic reticulum membrane. The protein resides in the mitochondrion membrane. It catalyses the reaction a 1,2-diacyl-sn-glycero-3-phosphocholine(in) = a 1,2-diacyl-sn-glycero-3-phosphocholine(out). The enzyme catalyses a 1,2-diacyl-sn-glycero-3-phospho-L-serine(in) = a 1,2-diacyl-sn-glycero-3-phospho-L-serine(out). The catalysed reaction is a 1,2-diacyl-sn-glycero-3-phosphoethanolamine(in) = a 1,2-diacyl-sn-glycero-3-phosphoethanolamine(out). It carries out the reaction a 1,2-diacyl-sn-glycero-3-phospho-(1D-myo-inositol-3-phosphate)(in) = a 1,2-diacyl-sn-glycero-3-phospho-(1D-myo-inositol-3-phosphate)(out). Its function is as follows. Phospholipid scramblase involved in autophagy and cytoplasm to vacuole transport (Cvt) vesicle formation. Cycles between the preautophagosomal structure/phagophore assembly site (PAS) and the cytoplasmic vesicle pool and supplies membrane for the growing autophagosome. Lipid scramblase activity plays a key role in preautophagosomal structure/phagophore assembly by distributing the phospholipids that arrive through ATG2 from the cytoplasmic to the luminal leaflet of the bilayer, thereby driving autophagosomal membrane expansion. Required for mitophagy. Also involved in endoplasmic reticulum-specific autophagic process and is essential for the survival of cells subjected to severe ER stress. Different machineries are required for anterograde trafficking to the PAS during either the Cvt pathway or bulk autophagy and for retrograde trafficking. Recruits vesicle-tethering proteins TRS85 and YPT1 to the autophagosome formation site. Also recruits ATG23 and ATG8 to the PAS. In Saccharomyces cerevisiae (strain YJM789) (Baker's yeast), this protein is Autophagy-related protein 9.